A 455-amino-acid chain; its full sequence is Bifunctional protein GlmU (455 aa).

The tract at residues 1-226 (MSLDIVILAA…AMEVQGANDR (226 aa)) is pyrophosphorylase. UDP-N-acetyl-alpha-D-glucosamine-binding positions include 8 to 11 (LAAG), lysine 22, glutamine 73, 78 to 79 (GT), 99 to 101 (YGD), glycine 136, glutamate 151, asparagine 166, and asparagine 224. Residue aspartate 101 coordinates Mg(2+). A Mg(2+)-binding site is contributed by asparagine 224. The linker stretch occupies residues 227–247 (RQLSELERHYQLREGRRLMAQ). Positions 248 to 455 (GVTLRDPARF…WKRPEKIKKS (208 aa)) are N-acetyltransferase. The UDP-N-acetyl-alpha-D-glucosamine site is built by arginine 330 and lysine 348. Histidine 360 acts as the Proton acceptor in catalysis. Residues tyrosine 363 and asparagine 374 each coordinate UDP-N-acetyl-alpha-D-glucosamine. Acetyl-CoA contacts are provided by residues alanine 377, 383 to 384 (NY), serine 402, alanine 420, and arginine 437.

It in the N-terminal section; belongs to the N-acetylglucosamine-1-phosphate uridyltransferase family. The protein in the C-terminal section; belongs to the transferase hexapeptide repeat family. In terms of assembly, homotrimer. It depends on Mg(2+) as a cofactor.

The protein resides in the cytoplasm. It carries out the reaction alpha-D-glucosamine 1-phosphate + acetyl-CoA = N-acetyl-alpha-D-glucosamine 1-phosphate + CoA + H(+). It catalyses the reaction N-acetyl-alpha-D-glucosamine 1-phosphate + UTP + H(+) = UDP-N-acetyl-alpha-D-glucosamine + diphosphate. It functions in the pathway nucleotide-sugar biosynthesis; UDP-N-acetyl-alpha-D-glucosamine biosynthesis; N-acetyl-alpha-D-glucosamine 1-phosphate from alpha-D-glucosamine 6-phosphate (route II): step 2/2. It participates in nucleotide-sugar biosynthesis; UDP-N-acetyl-alpha-D-glucosamine biosynthesis; UDP-N-acetyl-alpha-D-glucosamine from N-acetyl-alpha-D-glucosamine 1-phosphate: step 1/1. The protein operates within bacterial outer membrane biogenesis; LPS lipid A biosynthesis. Catalyzes the last two sequential reactions in the de novo biosynthetic pathway for UDP-N-acetylglucosamine (UDP-GlcNAc). The C-terminal domain catalyzes the transfer of acetyl group from acetyl coenzyme A to glucosamine-1-phosphate (GlcN-1-P) to produce N-acetylglucosamine-1-phosphate (GlcNAc-1-P), which is converted into UDP-GlcNAc by the transfer of uridine 5-monophosphate (from uridine 5-triphosphate), a reaction catalyzed by the N-terminal domain. This chain is Bifunctional protein GlmU, found in Pseudomonas putida (strain ATCC 47054 / DSM 6125 / CFBP 8728 / NCIMB 11950 / KT2440).